The sequence spans 326 residues: Meso-diaminopimelate D-dehydrogenase (326 aa).

NADP(+) contacts are provided by residues 11-14, 35-37, 69-72, 92-94, and 121-125; these read YGNL, TRR, CGGS, SFD, and VGWDP. Substrate-binding positions include aspartate 94, aspartate 124, tryptophan 148, 154 to 155, threonine 173, arginine 199, histidine 249, and asparagine 276; that span reads QG.

It belongs to the diaminopimelate dehydrogenase family. As to quaternary structure, homodimer.

The catalysed reaction is meso-2,6-diaminopimelate + NADP(+) + H2O = (S)-2-amino-6-oxoheptanedioate + NH4(+) + NADPH + H(+). It participates in amino-acid biosynthesis; L-lysine biosynthesis via DAP pathway; DL-2,6-diaminopimelate from (S)-tetrahydrodipicolinate: step 1/1. Its activity is regulated as follows. L,L-2,6-diaminopimelate, D,D-2,6-diaminopimelate and meso-2,5-diaminoadipate competitively inhibit the oxidation of meso-2,6-diaminopimelate. L-2-amino-6-methylene-pimelate is also a potent competitive inhibitor (5 uM) of this reaction. Glyoxylate inhibits the reductive amination of L-2-amino-6-oxopimelate about 30%. The enzyme is inhibited completely by p-chloromercuribenzoate and HgCl(2) in vitro. Functionally, catalyzes the reversible NADPH-dependent reductive amination of L-2-amino-6-oxopimelate, the acyclic form of L-tetrahydrodipicolinate, to generate the meso compound, D,L-2,6-diaminopimelate. Probably plays a role in lysine biosynthesis. Exhibits a high substrate specificity, since alpha-ketoglutarate, pyruvate, oxaloacetate, glyoxylate, alpha-ketobutyrate, alpha-ketovalerate, alpha-ketocaproate, alpha-ketoisocaproate, alpha-ketoisovalerate, and phenylpyruvate are not substrates for the reductive amination reaction, and L,L-2,6-diaminopimelate, D,D-2,6-diaminopimelate, DL-alpha-aminopimelate, meso- and DL-2,5-diaminoadipate, L-djenkolate, L-cystine, L-lysine, S-(beta-aminoethy1)-L-homocysteine, L-ornithine, L-arginine, L-alpha,gamma-diaminobutyrate, L-histidine, L-phenylalanine, L-tyrosine, L-glutamate, L-aspartate, L-leucine, L-valine, L-methionine, L-serine, L-alanine, L-alpha-aminobutyrate, D-lysine, D-glutamate, D-leucine, D-alanine, D-phenylalanine, epsilon-aminocaproate, 7-aminoheptanoate, and 8-aminooctanoate are not substrates for the oxidative deamination reaction. Cannot use NAD(+) or NAD(+) analogs instead of NADP(+) for the oxidative deamination reaction. The chain is Meso-diaminopimelate D-dehydrogenase (dapdh) from Lysinibacillus sphaericus (Bacillus sphaericus).